The chain runs to 248 residues: Triosephosphate isomerase (248 aa).

9 to 11 (NWK) is a binding site for substrate. Catalysis depends on His-94, which acts as the Electrophile. The active-site Proton acceptor is the Glu-166. Substrate-binding positions include Gly-172, Ser-212, and 233–234 (GG).

It belongs to the triosephosphate isomerase family. Homodimer.

Its subcellular location is the cytoplasm. The enzyme catalyses D-glyceraldehyde 3-phosphate = dihydroxyacetone phosphate. It participates in carbohydrate biosynthesis; gluconeogenesis. It functions in the pathway carbohydrate degradation; glycolysis; D-glyceraldehyde 3-phosphate from glycerone phosphate: step 1/1. In terms of biological role, involved in the gluconeogenesis. Catalyzes stereospecifically the conversion of dihydroxyacetone phosphate (DHAP) to D-glyceraldehyde-3-phosphate (G3P). This is Triosephosphate isomerase from Clostridium botulinum (strain Eklund 17B / Type B).